Reading from the N-terminus, the 374-residue chain is DNA replication and repair protein RecF (374 aa).

30-37 (GENAQGKT) serves as a coordination point for ATP.

It belongs to the RecF family.

It is found in the cytoplasm. Functionally, the RecF protein is involved in DNA metabolism; it is required for DNA replication and normal SOS inducibility. RecF binds preferentially to single-stranded, linear DNA. It also seems to bind ATP. The sequence is that of DNA replication and repair protein RecF from Pediococcus pentosaceus (strain ATCC 25745 / CCUG 21536 / LMG 10740 / 183-1w).